A 205-amino-acid chain; its full sequence is MANTLYDRTIAFAGICQAVALVQQVAKDGHCDKDAFEASLSAILNTNPANTVGVFGREANLKLGLECLVKGIDSTPAGSDITRYIISLMALERKLSSRNDSMSQLGDRIQTAERQTEHFDLFDEQMISNLASIYLDVVSPIGPRIQVSGTPAVLQQTSSQHKVRALLLSGIRSAVLWRQVGGKRRHLIFGRKKMIEQAQILLARM.

It belongs to the HflD family.

Its subcellular location is the cytoplasm. The protein localises to the cell inner membrane. This Vibrio atlanticus (strain LGP32) (Vibrio splendidus (strain Mel32)) protein is High frequency lysogenization protein HflD homolog.